Consider the following 155-residue polypeptide: MSKETKLQVEAIKNGTVIDHIPAKVGIKVLKLFDMHNSTQRVTIGLNLPSSALGSKDLLKIENVFISEAQASKLALYAPHATVNQIENYEVVKKLALQLPERINNVFACPNSNCISHNEPVESSFKLSEKNNDIRLKCKYCEKVFARDVVTEIEA.

4 residues coordinate Zn(2+): Cys109, Cys114, Cys138, and Cys141.

It belongs to the PyrI family. In terms of assembly, contains catalytic and regulatory chains. Zn(2+) serves as cofactor.

Its function is as follows. Involved in allosteric regulation of aspartate carbamoyltransferase. The polypeptide is Aspartate carbamoyltransferase regulatory chain (Vibrio cholerae serotype O1 (strain ATCC 39541 / Classical Ogawa 395 / O395)).